The sequence spans 260 residues: Flap endonuclease Xni (260 aa).

D105 is a binding site for Mg(2+). The region spanning 164–259 (NQFLDLMALA…VNGPANTQQA (96 aa)) is the 5'-3' exonuclease domain. Positions 172, 173, 181, 183, and 186 each coordinate K(+). Residues 185–190 (GIGPKS) are interaction with DNA.

Belongs to the Xni family. Mg(2+) is required as a cofactor. Requires K(+) as cofactor.

Its function is as follows. Has flap endonuclease activity. During DNA replication, flap endonucleases cleave the 5'-overhanging flap structure that is generated by displacement synthesis when DNA polymerase encounters the 5'-end of a downstream Okazaki fragment. The sequence is that of Flap endonuclease Xni from Shewanella sp. (strain MR-4).